The sequence spans 411 residues: Serine--tRNA ligase (411 aa).

Position 226–228 (226–228 (TSE)) interacts with L-serine. Position 257–259 (257–259 (RKE)) interacts with ATP. E280 is a binding site for L-serine. ATP is bound at residue 344-347 (EISS). Residue S379 participates in L-serine binding.

Belongs to the class-II aminoacyl-tRNA synthetase family. Type-1 seryl-tRNA synthetase subfamily. In terms of assembly, homodimer. The tRNA molecule binds across the dimer.

The protein resides in the cytoplasm. The enzyme catalyses tRNA(Ser) + L-serine + ATP = L-seryl-tRNA(Ser) + AMP + diphosphate + H(+). It carries out the reaction tRNA(Sec) + L-serine + ATP = L-seryl-tRNA(Sec) + AMP + diphosphate + H(+). The protein operates within aminoacyl-tRNA biosynthesis; selenocysteinyl-tRNA(Sec) biosynthesis; L-seryl-tRNA(Sec) from L-serine and tRNA(Sec): step 1/1. Catalyzes the attachment of serine to tRNA(Ser). Is also able to aminoacylate tRNA(Sec) with serine, to form the misacylated tRNA L-seryl-tRNA(Sec), which will be further converted into selenocysteinyl-tRNA(Sec). In Campylobacter jejuni subsp. doylei (strain ATCC BAA-1458 / RM4099 / 269.97), this protein is Serine--tRNA ligase.